Reading from the N-terminus, the 628-residue chain is Otolith matrix protein OMM-64 (628 aa).

Positions 1 to 20 (MLSRLLIVPLIFALAGLAIS) are cleaved as a signal peptide. The segment at 43–628 (KGDKDGGGLT…AAATALAAQS (586 aa)) is disordered. Low complexity predominate over residues 78 to 93 (DSSPDTTDTPDASSSD). Residues 182–214 (TESPGSDSAESPGSDSAESPGSDSTESPGSDST) show a composition bias toward polar residues. Composition is skewed to basic and acidic residues over residues 246 to 266 (ETDK…ATDK), 276 to 285 (ELDGKAHAED), and 311 to 343 (RPEK…RDSA). The N-linked (GlcNAc...) asparagine glycan is linked to asparagine 318. Composition is skewed to acidic residues over residues 449 to 462 (DSQE…EAEP), 477 to 489 (EPQE…DTDD), 514 to 536 (DKED…MDKD), 544 to 556 (DSVD…DAEP), and 565 to 578 (DEID…PDSE). Positions 613–628 (ASQAADAAATALAAQS) are enriched in low complexity.

Specifically expressed in otolith matrix-producing cells.

Its subcellular location is the secreted. It is found in the extracellular space. It localises to the extracellular matrix. In terms of biological role, calcium-binding component of otoliths, a calcium carbonate structure of the inner ear involved in hearing and balance sensing. Binds calcium. The sequence is that of Otolith matrix protein OMM-64 from Oncorhynchus mykiss (Rainbow trout).